A 156-amino-acid chain; its full sequence is Putative increased recombination centers protein 11 (156 aa).

The chain crosses the membrane as a helical span at residues 20–42; it reads AALGATCLLHYLTTSLSIRFFFH.

The protein resides in the membrane. The chain is Putative increased recombination centers protein 11 (IRC11) from Saccharomyces cerevisiae (strain ATCC 204508 / S288c) (Baker's yeast).